Consider the following 366-residue polypeptide: Ribosomal RNA large subunit methyltransferase M (366 aa).

Residues Ser-188, 221–224, Asp-240, Asp-260, and Asp-277 each bind S-adenosyl-L-methionine; that span reads CPGG. The active-site Proton acceptor is Lys-306.

Belongs to the class I-like SAM-binding methyltransferase superfamily. RNA methyltransferase RlmE family. RlmM subfamily. As to quaternary structure, monomer.

It is found in the cytoplasm. It carries out the reaction cytidine(2498) in 23S rRNA + S-adenosyl-L-methionine = 2'-O-methylcytidine(2498) in 23S rRNA + S-adenosyl-L-homocysteine + H(+). Its function is as follows. Catalyzes the 2'-O-methylation at nucleotide C2498 in 23S rRNA. The polypeptide is Ribosomal RNA large subunit methyltransferase M (Escherichia coli O127:H6 (strain E2348/69 / EPEC)).